A 124-amino-acid polypeptide reads, in one-letter code: MPTIQQLVRKGRSPKVVNTKAPALQGNPMRRGVCTRVYTTTPKKPNSALRKVARVRLNGGIEVTAYIPGEGHNLQEHSIVLVRGGRVKDLPGVRYKIVRGALDTQGVKNRGQARSRYGAKKEKK.

The residue at position 89 (Asp-89) is a 3-methylthioaspartic acid. The tract at residues 104 to 124 (TQGVKNRGQARSRYGAKKEKK) is disordered. Over residues 111–124 (GQARSRYGAKKEKK) the composition is skewed to basic residues.

It belongs to the universal ribosomal protein uS12 family. As to quaternary structure, part of the 30S ribosomal subunit. Contacts proteins S8 and S17. May interact with IF1 in the 30S initiation complex.

Its function is as follows. With S4 and S5 plays an important role in translational accuracy. Interacts with and stabilizes bases of the 16S rRNA that are involved in tRNA selection in the A site and with the mRNA backbone. Located at the interface of the 30S and 50S subunits, it traverses the body of the 30S subunit contacting proteins on the other side and probably holding the rRNA structure together. The combined cluster of proteins S8, S12 and S17 appears to hold together the shoulder and platform of the 30S subunit. This chain is Small ribosomal subunit protein uS12, found in Micrococcus luteus (strain ATCC 4698 / DSM 20030 / JCM 1464 / CCM 169 / CCUG 5858 / IAM 1056 / NBRC 3333 / NCIMB 9278 / NCTC 2665 / VKM Ac-2230) (Micrococcus lysodeikticus).